The primary structure comprises 209 residues: MPADTPIRKKPNAYASVVDPDTGYCTPGAFELERLFWHGAPKYNHVNEVWPNLYIGDEKTALDRYSLEKNGFTHILNAAHGRWNVDTGPEYYSDITVEYYGVEAEDLPSFNLSQFFYPAAQFIRNALSSPSSKVLVNCAMGRSRSASLVLAYLMIYENMTVVDSIMQVLKHRCILPNRGFLKQLRELDIQLALERRGTEDTAKKAQKDD.

The region spanning 44 to 193 (NHVNEVWPNL…LRELDIQLAL (150 aa)) is the Tyrosine-protein phosphatase domain. A substrate-binding site is contributed by 137–144 (NCAMGRSR). Cysteine 138 (phosphocysteine intermediate) is an active-site residue.

This sequence belongs to the protein-tyrosine phosphatase family. Non-receptor class dual specificity subfamily.

The protein localises to the cytoplasm. It is found in the nucleus. The catalysed reaction is O-phospho-L-tyrosyl-[protein] + H2O = L-tyrosyl-[protein] + phosphate. The enzyme catalyses O-phospho-L-seryl-[protein] + H2O = L-seryl-[protein] + phosphate. It catalyses the reaction O-phospho-L-threonyl-[protein] + H2O = L-threonyl-[protein] + phosphate. Functionally, dual specificity phosphatase able to dephosphorylate phosphotyrosine, phosphoserine and phosphothreonine residues within the same substrate, with a preference for phosphotyrosine as a substrate. Involved in the modulation of AMPK and MAPK1/2 signaling pathways. The protein is Dual specificity phosphatase 29 (dusp29) of Xenopus tropicalis (Western clawed frog).